Here is a 163-residue protein sequence, read N- to C-terminus: Putative pre-16S rRNA nuclease (163 aa).

Belongs to the YqgF nuclease family.

It localises to the cytoplasm. In terms of biological role, could be a nuclease involved in processing of the 5'-end of pre-16S rRNA. This chain is Putative pre-16S rRNA nuclease, found in Rhizobium leguminosarum bv. trifolii (strain WSM2304).